A 189-amino-acid polypeptide reads, in one-letter code: Putative manganese efflux pump MntP (189 aa).

6 helical membrane passes run 3-23, 41-61, 65-85, 104-124, 132-152, and 165-185; these read LSATLVLAFAMSMDAFAASIG, LIFGVIEAITPLIGWCIGLFA, ILEWDHWIAFSLLFILGCRMI, FWVLVMTAIATSLDAMAIGVG, IVHTAMAIGLATMIMATLGML, and AEIIGGIVLIGIGFNILYEHI.

Belongs to the MntP (TC 9.B.29) family.

The protein localises to the cell inner membrane. Functionally, probably functions as a manganese efflux pump. The protein is Putative manganese efflux pump MntP of Yersinia enterocolitica serotype O:8 / biotype 1B (strain NCTC 13174 / 8081).